We begin with the raw amino-acid sequence, 476 residues long: Glycogen synthase (476 aa).

K15 serves as a coordination point for ADP-alpha-D-glucose.

The protein belongs to the glycosyltransferase 1 family. Bacterial/plant glycogen synthase subfamily.

The enzyme catalyses [(1-&gt;4)-alpha-D-glucosyl](n) + ADP-alpha-D-glucose = [(1-&gt;4)-alpha-D-glucosyl](n+1) + ADP + H(+). The protein operates within glycan biosynthesis; glycogen biosynthesis. Its function is as follows. Synthesizes alpha-1,4-glucan chains using ADP-glucose. In Bacillus cereus (strain ATCC 10987 / NRS 248), this protein is Glycogen synthase.